Consider the following 462-residue polypeptide: MRCFRWWLYSGWWWLTFGCARTVTVGFVAPTVRAQSTVVRSEPAPPSETRRDNNDTSYFSSTSFHSSVSPATSVDRQFRRTTYDRWDGRRWLRTRYGNASACVTGTQWSTNFFFSQCEHYPSFVKLNGVQRWTPVRRPMGEVAYYGGCCMVGGGNRAYVILVSGYGTASYGNALRVNFGRGNCTAPKRTYPRRLELHDGRTDPSRCDPYQVYFYGLQCPEQLVITAHGGVGMRRCPTGSRPTPSRPHRHDLENELHGLCVDLLVCVLLLALLLLELVPMEAVRHPLLFWRRVALSPSTSKVDRAVKLCLRRMFGLPPPPSVAPPGEKKELPAQAALSPPLTTWSLPPFPSTRIPDSPPPPYQLRHATSLVTVPTLLLYTSSDIGDTASETTCVAHATYGEPPEPARSTATVQECTVLTAPNCGIVNNDGAVSEGQDHGDAVHHSLDVVSQCAADTGVVDTSE.

2 helical membrane passes run 12-32 and 257-277; these read WWWL…APTV and GLCV…LELV.

It belongs to the HHV-5 US29 protein family.

It is found in the host membrane. This is an uncharacterized protein from Human cytomegalovirus (strain AD169) (HHV-5).